Here is a 334-residue protein sequence, read N- to C-terminus: Ornithine carbamoyltransferase (334 aa).

Carbamoyl phosphate is bound by residues 56-59 (STRT), Gln83, Arg107, and 134-137 (HPTQ). L-ornithine-binding positions include Asn168, Asp232, and 236-237 (SM). Carbamoyl phosphate is bound by residues 274-275 (CL) and Arg320.

The protein belongs to the aspartate/ornithine carbamoyltransferase superfamily. OTCase family.

The protein localises to the cytoplasm. The catalysed reaction is carbamoyl phosphate + L-ornithine = L-citrulline + phosphate + H(+). It participates in amino-acid biosynthesis; L-arginine biosynthesis; L-arginine from L-ornithine and carbamoyl phosphate: step 1/3. Reversibly catalyzes the transfer of the carbamoyl group from carbamoyl phosphate (CP) to the N(epsilon) atom of ornithine (ORN) to produce L-citrulline. This chain is Ornithine carbamoyltransferase, found in Shigella boydii serotype 4 (strain Sb227).